Here is a 534-residue protein sequence, read N- to C-terminus: Putative fimbrium tip subunit Fim1C (534 aa).

Residues 1 to 21 form the signal peptide; it reads MKQYKLMQVALLAILLFGWAG. A lipid anchor (N-palmitoyl cysteine) is attached at C22. C22 carries S-diacylglycerol cysteine lipidation. Residues 22–54 constitute a propeptide that is removed on maturation; the sequence is CSQNEEEVPGNVRNGIVLNVTDTGIISNEPSTR.

Belongs to the bacteroidetes fimbrillin superfamily. Mfa-like family. In terms of assembly, may be part of the fimbrial tip.

Its subcellular location is the fimbrium. The protein resides in the cell outer membrane. Its function is as follows. Probably a component of the fimbrium tip. Fimbriae are filamentous appendages on the cell surface that mediate cell adhesion and biofilm formation. The protein is Putative fimbrium tip subunit Fim1C of Bacteroides ovatus (strain ATCC 8483 / DSM 1896 / JCM 5824 / BCRC 10623 / CCUG 4943 / NCTC 11153).